The following is a 149-amino-acid chain: Ribosome maturation factor RimP (149 aa).

This sequence belongs to the RimP family.

The protein localises to the cytoplasm. Functionally, required for maturation of 30S ribosomal subunits. In Sulfurimonas denitrificans (strain ATCC 33889 / DSM 1251) (Thiomicrospira denitrificans (strain ATCC 33889 / DSM 1251)), this protein is Ribosome maturation factor RimP.